A 224-amino-acid polypeptide reads, in one-letter code: ATP-dependent dethiobiotin synthetase BioD (224 aa).

Thr18 provides a ligand contact to Mg(2+). The active site involves Lys39. Ser43 is a substrate binding site. Positions 56 and 117 each coordinate Mg(2+). ATP-binding positions include Asp56, 117–120 (EGVG), and 177–178 (NE).

The protein belongs to the dethiobiotin synthetase family. As to quaternary structure, homodimer. The cofactor is Mg(2+).

It is found in the cytoplasm. It carries out the reaction (7R,8S)-7,8-diammoniononanoate + CO2 + ATP = (4R,5S)-dethiobiotin + ADP + phosphate + 3 H(+). It functions in the pathway cofactor biosynthesis; biotin biosynthesis; biotin from 7,8-diaminononanoate: step 1/2. Its function is as follows. Catalyzes a mechanistically unusual reaction, the ATP-dependent insertion of CO2 between the N7 and N8 nitrogen atoms of 7,8-diaminopelargonic acid (DAPA, also called 7,8-diammoniononanoate) to form a ureido ring. This is ATP-dependent dethiobiotin synthetase BioD from Xanthomonas axonopodis pv. citri (strain 306).